The chain runs to 133 residues: Nucleoside diphosphate kinase (133 aa).

ATP contacts are provided by K9, F57, R85, T91, R102, and N112. H115 functions as the Pros-phosphohistidine intermediate in the catalytic mechanism.

The protein belongs to the NDK family. Mg(2+) serves as cofactor.

Its subcellular location is the cytoplasm. It catalyses the reaction a 2'-deoxyribonucleoside 5'-diphosphate + ATP = a 2'-deoxyribonucleoside 5'-triphosphate + ADP. The enzyme catalyses a ribonucleoside 5'-diphosphate + ATP = a ribonucleoside 5'-triphosphate + ADP. In terms of biological role, major role in the synthesis of nucleoside triphosphates other than ATP. The ATP gamma phosphate is transferred to the NDP beta phosphate via a ping-pong mechanism, using a phosphorylated active-site intermediate. The sequence is that of Nucleoside diphosphate kinase from Methanococcus maripaludis (strain DSM 14266 / JCM 13030 / NBRC 101832 / S2 / LL).